The sequence spans 342 residues: Thiosulfate/3-mercaptopyruvate sulfurtransferase 2 (342 aa).

Rhodanese domains follow at residues 56–173 (GDAD…DVES) and 224–338 (EDKT…LPIV). Catalysis depends on cysteine 298, which acts as the Cysteine persulfide intermediate.

In terms of tissue distribution, expressed in roots, rosette and cauline leaves, stems, flowers and siliques.

It is found in the cytoplasm. The enzyme catalyses thiosulfate + hydrogen cyanide = thiocyanate + sulfite + 2 H(+). It carries out the reaction 2-oxo-3-sulfanylpropanoate + [thioredoxin]-dithiol = [thioredoxin]-disulfide + hydrogen sulfide + pyruvate + H(+). Its function is as follows. Catalyzes the transfer of a sulfur ion from a donor to cyanide or to other thiol compounds. Substrate preference is 3-mercaptopyruvate &gt; thiosulfate. Involved in embryo and seed development. The protein is Thiosulfate/3-mercaptopyruvate sulfurtransferase 2 (STR2) of Arabidopsis thaliana (Mouse-ear cress).